The primary structure comprises 119 residues: Bombesin (119 aa).

The signal sequence occupies residues 1–29; it reads MSAIPLNRILPLGFLFHLLIFSFISLSSC. Residues 30–44 constitute a propeptide that is removed on maturation; that stretch reads MEFVEDPNNQGRISL. At M58 the chain carries Methionine amide. Positions 62 to 119 are excised as a propeptide; it reads SLQDTDFEEMESFAKRNVENMRAALLQEQNRAESERELRHAQLVVRNILEQYLKNMQN.

This sequence belongs to the bombesin/neuromedin-B/ranatensin family. Localized to the cutaneous granular glands in the skin and the brain.

The protein localises to the secreted. Its function is as follows. Stimulates smooth muscle contraction. Role in induction of hypothermia, stimulation of DNA replication and release of many gastrointestinal hormones. This Bombina orientalis (Oriental fire-bellied toad) protein is Bombesin.